The following is a 575-amino-acid chain: Kelch repeat and BTB domain-containing protein 8 (575 aa).

The BTB domain maps to 23 to 91 (TDIVVEVDHG…AYTSRVILTE (69 aa)). Positions 126-228 (SIGVFIFADH…MEDAFIEKIP (103 aa)) constitute a BACK domain. 5 Kelch repeats span residues 310 to 364 (DIYI…YCCG), 365 to 415 (KMYA…EHKE), 417 to 455 (IYVLQGEFFLFYEPQKDYWGFLTPMTVPRIQGLAAVYKD), 457 to 506 (IYYI…LFQN), and 516 to 562 (QVTV…FECA).

Belongs to the KBTBD8 family. As to quaternary structure, component of the BCR(KBTBD8) E3 ubiquitin ligase complex, at least composed of CUL3, KBTBD8 and RBX1.

The protein localises to the cytoplasm. It is found in the cytoskeleton. It localises to the spindle. Its subcellular location is the golgi apparatus. Its function is as follows. Substrate-specific adapter of a BCR (BTB-CUL3-RBX1) E3 ubiquitin ligase complex that acts as a regulator of neural crest specification. The BCR(KBTBD8) complex acts by mediating monoubiquitination of NOLC1 and TCOF1: monoubiquitination promotes the formation of a NOLC1-TCOF1 complex that acts as a platform to connect RNA polymerase I with enzymes responsible for ribosomal processing and modification, leading to remodel the translational program of differentiating cells in favor of neural crest specification. This is Kelch repeat and BTB domain-containing protein 8 from Rattus norvegicus (Rat).